The following is a 64-amino-acid chain: Large ribosomal subunit protein bL32 (64 aa).

It belongs to the bacterial ribosomal protein bL32 family.

The polypeptide is Large ribosomal subunit protein bL32 (Flavobacterium psychrophilum (strain ATCC 49511 / DSM 21280 / CIP 103535 / JIP02/86)).